The following is a 357-amino-acid chain: tRNA N6-adenosine threonylcarbamoyltransferase (357 aa).

Fe cation-binding residues include H115 and H119. Residues 137 to 141, D170, G183, and N281 contribute to the substrate site; that span reads LASGG. D309 contributes to the Fe cation binding site.

The protein belongs to the KAE1 / TsaD family. Requires Fe(2+) as cofactor.

The protein localises to the cytoplasm. It carries out the reaction L-threonylcarbamoyladenylate + adenosine(37) in tRNA = N(6)-L-threonylcarbamoyladenosine(37) in tRNA + AMP + H(+). In terms of biological role, required for the formation of a threonylcarbamoyl group on adenosine at position 37 (t(6)A37) in tRNAs that read codons beginning with adenine. Is involved in the transfer of the threonylcarbamoyl moiety of threonylcarbamoyl-AMP (TC-AMP) to the N6 group of A37, together with TsaE and TsaB. TsaD likely plays a direct catalytic role in this reaction. The chain is tRNA N6-adenosine threonylcarbamoyltransferase from Nitrobacter hamburgensis (strain DSM 10229 / NCIMB 13809 / X14).